Reading from the N-terminus, the 200-residue chain is SKP1-like protein 19 (200 aa).

The segment covering Asp-67–Asp-92 has biased composition (basic and acidic residues). Residues Asp-67–Lys-109 are disordered. Residues Ile-132–Glu-190 are interaction with the F-box domain of F-box proteins.

This sequence belongs to the SKP1 family. Part of a SCF (SKP1-cullin-F-box) protein ligase complex. Interacts with CPR1/CPR30. Expressed in leaves and flowers.

It localises to the nucleus. It participates in protein modification; protein ubiquitination. Functionally, involved in ubiquitination and subsequent proteasomal degradation of target proteins. Together with CUL1, RBX1 and a F-box protein, it forms a SCF E3 ubiquitin ligase complex. The functional specificity of this complex depends on the type of F-box protein. In the SCF complex, it serves as an adapter that links the F-box protein to CUL1. In Arabidopsis thaliana (Mouse-ear cress), this protein is SKP1-like protein 19 (ASK19).